A 561-amino-acid chain; its full sequence is uncharacterized protein (561 aa).

Residues 187–217 (DDEELSEEEILNRIDKLQIELEQVIGKQKNI) are a coiled coil.

This is an uncharacterized protein from Dictyostelium discoideum (Social amoeba).